A 118-amino-acid chain; its full sequence is MIGIDLVSIERIEAFIAKHGQRGLERFLLPEEILLANKPETIAGFWAAKEACSKALGTGIGAEVGFHDIRLFKNPKGAPLLELSPRVKDRFEIDSCALSITHDKGFAIAVVAMEKRRA.

Asp-5 and Glu-50 together coordinate Mg(2+).

The protein belongs to the P-Pant transferase superfamily. AcpS family. The cofactor is Mg(2+).

The protein resides in the cytoplasm. It carries out the reaction apo-[ACP] + CoA = holo-[ACP] + adenosine 3',5'-bisphosphate + H(+). In terms of biological role, transfers the 4'-phosphopantetheine moiety from coenzyme A to a Ser of acyl-carrier-protein. This Wolinella succinogenes (strain ATCC 29543 / DSM 1740 / CCUG 13145 / JCM 31913 / LMG 7466 / NCTC 11488 / FDC 602W) (Vibrio succinogenes) protein is Holo-[acyl-carrier-protein] synthase.